Here is a 528-residue protein sequence, read N- to C-terminus: Chaperonin GroEL, chloroplastic (528 aa).

Residues 29-32, 86-90, glycine 414, and aspartate 496 each bind ATP; these read TLGP and DGTTT.

Belongs to the chaperonin (HSP60) family. As to quaternary structure, forms a cylinder of 14 subunits composed of two heptameric rings stacked back-to-back. Interacts with the co-chaperonin GroES.

The protein resides in the plastid. It is found in the chloroplast. It catalyses the reaction ATP + H2O + a folded polypeptide = ADP + phosphate + an unfolded polypeptide.. Its function is as follows. Together with its co-chaperonin GroES, plays an essential role in assisting protein folding. The GroEL-GroES system forms a nano-cage that allows encapsulation of the non-native substrate proteins and provides a physical environment optimized to promote and accelerate protein folding. The polypeptide is Chaperonin GroEL, chloroplastic (Gracilaria tenuistipitata var. liui (Red alga)).